We begin with the raw amino-acid sequence, 385 residues long: Lipid-A-disaccharide synthase (385 aa).

It belongs to the LpxB family.

It carries out the reaction a lipid X + a UDP-2-N,3-O-bis[(3R)-3-hydroxyacyl]-alpha-D-glucosamine = a lipid A disaccharide + UDP + H(+). The protein operates within bacterial outer membrane biogenesis; LPS lipid A biosynthesis. Condensation of UDP-2,3-diacylglucosamine and 2,3-diacylglucosamine-1-phosphate to form lipid A disaccharide, a precursor of lipid A, a phosphorylated glycolipid that anchors the lipopolysaccharide to the outer membrane of the cell. The protein is Lipid-A-disaccharide synthase of Xylella fastidiosa (strain M12).